A 233-amino-acid chain; its full sequence is Thrombin-like enzyme elegaxobin-1 (233 aa).

One can recognise a Peptidase S1 domain in the interval 1–224 (VIGGDECNIN…HLDWIKGIIA (224 aa)). 6 disulfide bridges follow: Cys7-Cys138, Cys25-Cys41, Cys73-Cys231, Cys117-Cys185, Cys149-Cys164, and Cys175-Cys200. Catalysis depends on charge relay system residues His40 and Asp85. The active-site Charge relay system is the Ser179.

It belongs to the peptidase S1 family. Snake venom subfamily. In terms of assembly, monomer. Expressed by the venom gland.

It is found in the secreted. Thrombin-like snake venom serine protease that clots rabbit fibrinogen. Only the beta chain of fibrinogen (FGB) is cleaved, releasing fibrinopeptide B. Incubation with human fibrinogen alpha and beta resulted in cleavage of both fibrinogen chains but generated neither fibrinopeptide A nor fibrinopeptide B. Promotes clotting of rabbit fibrinogen, but not bovine or human fibrinogen. The protein is Thrombin-like enzyme elegaxobin-1 of Protobothrops elegans (Elegant pitviper).